The primary structure comprises 346 residues: Uroporphyrinogen decarboxylase (346 aa).

Substrate is bound by residues Arg-26–Arg-30, Asp-76, Tyr-153, Ser-208, and His-323.

It belongs to the uroporphyrinogen decarboxylase family. Homodimer.

The protein resides in the cytoplasm. It catalyses the reaction uroporphyrinogen III + 4 H(+) = coproporphyrinogen III + 4 CO2. It functions in the pathway porphyrin-containing compound metabolism; protoporphyrin-IX biosynthesis; coproporphyrinogen-III from 5-aminolevulinate: step 4/4. Catalyzes the decarboxylation of four acetate groups of uroporphyrinogen-III to yield coproporphyrinogen-III. The protein is Uroporphyrinogen decarboxylase of Prochlorococcus marinus (strain MIT 9515).